We begin with the raw amino-acid sequence, 217 residues long: External core antigen (217 aa).

A signal peptide spans Met-1 to Ala-20. Positions Gly-26 to Leu-28 are HBEAG. The disordered stretch occupies residues Ala-166–Cys-217. Over residues Ile-178–Ser-210 the composition is skewed to basic residues. One copy of the 1; half-length repeat lies at Ser-189–Pro-195. A 3 X 8 AA repeats of S-P-R-R-R-R-S-Q region spans residues Ser-189–Gln-211. Residues Ser-189–Cys-217 constitute a propeptide that is removed on maturation. Tandem repeats lie at residues Ser-196 to Gln-203 and Ser-204 to Gln-211.

The protein belongs to the orthohepadnavirus precore antigen family. Homodimerizes. In terms of processing, phosphorylated. Post-translationally, cleaved by host furin.

It is found in the secreted. The protein resides in the host nucleus. May regulate immune response to the intracellular capsid in acting as a T-cell tolerogen, by having an immunoregulatory effect which prevents destruction of infected cells by cytotoxic T-cells. This immune regulation may predispose to chronicity during perinatal infections and prevent severe liver injury during adult infections. The chain is External core antigen from Otospermophilus beecheyi (California ground squirrel).